A 120-amino-acid chain; its full sequence is MFLLYEYDIFWAFLVISSVIPILAFIISGVLAPLSEGPEKLSSYESGIEPIGDAWVQFRIRYYMFALVFVVFDVETVFLYPWAMSFDVLGVSVFIEALIFVLILIVGSVYAWRKGALEWS.

3 consecutive transmembrane segments (helical) span residues 9 to 29 (IFWAFLVISSVIPILAFIISG), 64 to 84 (MFALVFVVFDVETVFLYPWAM), and 88 to 108 (VLGVSVFIEALIFVLILIVGS).

The protein belongs to the complex I subunit 3 family. In terms of assembly, NDH is composed of at least 16 different subunits, 5 of which are encoded in the nucleus.

The protein localises to the plastid. It localises to the chloroplast thylakoid membrane. It catalyses the reaction a plastoquinone + NADH + (n+1) H(+)(in) = a plastoquinol + NAD(+) + n H(+)(out). It carries out the reaction a plastoquinone + NADPH + (n+1) H(+)(in) = a plastoquinol + NADP(+) + n H(+)(out). Its function is as follows. NDH shuttles electrons from NAD(P)H:plastoquinone, via FMN and iron-sulfur (Fe-S) centers, to quinones in the photosynthetic chain and possibly in a chloroplast respiratory chain. The immediate electron acceptor for the enzyme in this species is believed to be plastoquinone. Couples the redox reaction to proton translocation, and thus conserves the redox energy in a proton gradient. The polypeptide is NAD(P)H-quinone oxidoreductase subunit 3, chloroplastic (Lemna minor (Common duckweed)).